A 311-amino-acid chain; its full sequence is Lipoyl synthase (311 aa).

[4Fe-4S] cluster is bound by residues C47, C52, C58, C73, C77, C80, and S286. Residues 59–276 (WSRHTATYLA…RSVGESLGLF (218 aa)) enclose the Radical SAM core domain.

Belongs to the radical SAM superfamily. Lipoyl synthase family. Requires [4Fe-4S] cluster as cofactor.

Its subcellular location is the cytoplasm. The catalysed reaction is [[Fe-S] cluster scaffold protein carrying a second [4Fe-4S](2+) cluster] + N(6)-octanoyl-L-lysyl-[protein] + 2 oxidized [2Fe-2S]-[ferredoxin] + 2 S-adenosyl-L-methionine + 4 H(+) = [[Fe-S] cluster scaffold protein] + N(6)-[(R)-dihydrolipoyl]-L-lysyl-[protein] + 4 Fe(3+) + 2 hydrogen sulfide + 2 5'-deoxyadenosine + 2 L-methionine + 2 reduced [2Fe-2S]-[ferredoxin]. It participates in protein modification; protein lipoylation via endogenous pathway; protein N(6)-(lipoyl)lysine from octanoyl-[acyl-carrier-protein]: step 2/2. In terms of biological role, catalyzes the radical-mediated insertion of two sulfur atoms into the C-6 and C-8 positions of the octanoyl moiety bound to the lipoyl domains of lipoate-dependent enzymes, thereby converting the octanoylated domains into lipoylated derivatives. This Chlamydia trachomatis serovar A (strain ATCC VR-571B / DSM 19440 / HAR-13) protein is Lipoyl synthase.